Consider the following 386-residue polypeptide: Succinate--CoA ligase [ADP-forming] subunit beta (386 aa).

The region spanning 9 to 244 (KDLLTSYQLP…PSQENIRDVL (236 aa)) is the ATP-grasp domain. ATP contacts are provided by residues Lys46, 53-55 (GRG), Val102, and Glu107. Positions 199 and 213 each coordinate Mg(2+). Substrate-binding positions include Asn264 and 321–323 (GIM).

Belongs to the succinate/malate CoA ligase beta subunit family. As to quaternary structure, heterotetramer of two alpha and two beta subunits. It depends on Mg(2+) as a cofactor.

It catalyses the reaction succinate + ATP + CoA = succinyl-CoA + ADP + phosphate. The catalysed reaction is GTP + succinate + CoA = succinyl-CoA + GDP + phosphate. It functions in the pathway carbohydrate metabolism; tricarboxylic acid cycle; succinate from succinyl-CoA (ligase route): step 1/1. Functionally, succinyl-CoA synthetase functions in the citric acid cycle (TCA), coupling the hydrolysis of succinyl-CoA to the synthesis of either ATP or GTP and thus represents the only step of substrate-level phosphorylation in the TCA. The beta subunit provides nucleotide specificity of the enzyme and binds the substrate succinate, while the binding sites for coenzyme A and phosphate are found in the alpha subunit. The sequence is that of Succinate--CoA ligase [ADP-forming] subunit beta from Chlamydia muridarum (strain MoPn / Nigg).